A 199-amino-acid chain; its full sequence is Protein GrpE (199 aa).

Residues 20 to 52 (YKVENEILEEETDEESQHQEPALGHPSYTALEE) are disordered.

The protein belongs to the GrpE family. As to quaternary structure, homodimer.

It localises to the cytoplasm. In terms of biological role, participates actively in the response to hyperosmotic and heat shock by preventing the aggregation of stress-denatured proteins, in association with DnaK and GrpE. It is the nucleotide exchange factor for DnaK and may function as a thermosensor. Unfolded proteins bind initially to DnaJ; upon interaction with the DnaJ-bound protein, DnaK hydrolyzes its bound ATP, resulting in the formation of a stable complex. GrpE releases ADP from DnaK; ATP binding to DnaK triggers the release of the substrate protein, thus completing the reaction cycle. Several rounds of ATP-dependent interactions between DnaJ, DnaK and GrpE are required for fully efficient folding. The protein is Protein GrpE of Legionella pneumophila (strain Corby).